Here is a 23-residue protein sequence, read N- to C-terminus: NADH-ubiquinone oxidoreductase 29 kDa subunit (23 aa).

As to quaternary structure, complex I is composed of about 45 different subunits.

The protein localises to the mitochondrion inner membrane. It catalyses the reaction a ubiquinone + NADH + 5 H(+)(in) = a ubiquinol + NAD(+) + 4 H(+)(out). Transfer of electrons from NADH to the respiratory chain. The immediate electron acceptor for the enzyme is believed to be ubiquinone. The sequence is that of NADH-ubiquinone oxidoreductase 29 kDa subunit from Solanum tuberosum (Potato).